The chain runs to 812 residues: E3 UFM1-protein ligase 1 homolog (812 aa).

A disordered region spans residues 389–495 (IKHSAGQGKP…KTKEDNTNIF (107 aa)). Composition is skewed to basic and acidic residues over residues 403-415 (SEHR…KDLG) and 475-491 (DAKH…KEDN).

It belongs to the UFL1 family.

Its function is as follows. E3 UFM1-protein ligase that mediates ufmylation of target proteins. This is E3 UFM1-protein ligase 1 homolog from Oryza sativa subsp. indica (Rice).